A 670-amino-acid polypeptide reads, in one-letter code: MELLVVTLTCLGMSLLASNLALVGVVRSYTNETPTPGPETELITTTVARMTDPTAKPSDFPGDAVTGTQPVPREPSSLPRTTPSLAHTTISKMISLGTRPRPTIPGVPTTIPNTDAPVDPGSVHTTARVVTDITTKQTPTTPATPAGANDTANITTATPAGANDTANITTATPAGANDTANITTATPAGANDTAVTTTSATPAGANDTAVTTTPATPAGANDTANGTVVTTTPAMPAGANDTANGTAVTTTPAMPAGANDTANITTATPTGANDTANVTMPAGATDTVVTTTPAMPTGANDTANITTATPAGANDTANVTMPAGATDTVVTTTPAMPAGANDTANVTKPAGSTDTVVTTTPAMPTGATDTVVTTTPAMPTGATDTVVTTTPAMPTGATDTVVTTTPAKPAGANGTVVTTTPAMPAGANDTVVTTAPATPAGANDTANVTKPTGATDTVVTTATVKPTGATGTVTTTTAKPTGANDTANVTKPTGATGTVTTTTAKPTGATGTVTVATAKPTGATGTVTTTTAKPTGANGTVTTTTAKPTGATGTVTTTTAKPTGANGTVTTTTAKPAGANGTVTTTTAKPAGANGTVTTTTAKPAGANGTVTTTTAKPAGANGTVTTTTAKPAGAGHGHGHGHGHGHGHGHGHGGRGPPGGHKPKSGARR.

The tract at residues Pro53 to Pro83 is disordered. 27 consecutive repeat copies span residues Ala143 to Thr158, Ala171 to Thr186, Ala200 to Pro214, Ala215 to Pro233, Ala234 to Pro252, Ala253 to Thr268, Thr279 to Pro293, Ala294 to Thr309, Thr320 to Pro334, Ala335 to Pro349, Ala362 to Pro376, Ala377 to Pro391, Ala392 to Pro406, Ala407 to Pro421, Ala422 to Pro436, Ala437 to Thr452, Val464 to Thr477, Ala478 to Thr493, Ala504 to Thr517, Ala518 to Thr531, Ala532 to Thr545, Ala546 to Thr559, Ala560 to Thr573, Ala574 to Thr587, Ala588 to Thr601, Ala602 to Thr615, and Ala616 to Thr629. Positions Pro187–Asn225 are disordered. The segment covering Ala205–Asn225 has biased composition (low complexity). Positions Gly339–Thr395 are disordered. The segment covering Asp342 to Ala362 has biased composition (polar residues). Residues Met363–Thr395 show a composition bias toward low complexity. 2 stretches are compositionally biased toward low complexity: residues Gly471–Gly482 and Thr490–Thr503. Residues Gly471–Thr503 are disordered. Residues Gly525 to Gly634 show a composition bias toward low complexity. The tract at residues Gly525–Arg670 is disordered. The segment covering Gly638 to Gly654 has biased composition (basic residues).

This is an uncharacterized protein from Ictalurid herpesvirus 1 (strain Auburn) (IcHV-1).